The chain runs to 338 residues: Malate dehydrogenase, mitochondrial (338 aa).

Residues 1–24 (MLSALARPASAALRRSFSTSAQNN) constitute a mitochondrion transit peptide. Residues 31–37 (GASGGIG) and Asp-57 contribute to the NAD(+) site. A glycan (O-linked (GlcNAc) serine) is linked at Ser-33. Lys-78 and Lys-91 each carry N6-acetyllysine; alternate. Lys-78 and Lys-91 each carry N6-succinyllysine; alternate. Residues Arg-104 and Arg-110 each contribute to the substrate site. Residues Asn-117 and 140–142 (IAN) each bind NAD(+). Asn-142 is a binding site for substrate. Lys-165 is modified (N6-acetyllysine). Residue Arg-176 coordinates substrate. Lys-185 carries the N6-acetyllysine; alternate modification. Lys-185 carries the post-translational modification N6-succinyllysine; alternate. The active-site Proton acceptor is His-200. N6-succinyllysine is present on Lys-203. N6-acetyllysine; alternate is present on residues Lys-215 and Lys-239. Residues Lys-215 and Lys-239 each carry the N6-succinyllysine; alternate modification. Lys-239 bears the N6-malonyllysine; alternate mark. Ser-246 is subject to Phosphoserine. An NAD(+)-binding site is contributed by Met-251. Lys-269 bears the N6-succinyllysine mark. N6-acetyllysine; alternate occurs at positions 296, 301, 307, 314, and 324. 5 positions are modified to N6-succinyllysine; alternate: Lys-296, Lys-301, Lys-307, Lys-314, and Lys-324. Residue Lys-307 is modified to N6-malonyllysine; alternate. Ser-326 carries the phosphoserine modification. An N6-acetyllysine; alternate mark is found at Lys-328, Lys-329, and Lys-335. Position 328 is an N6-succinyllysine; alternate (Lys-328). Lys-329 is subject to N6-malonyllysine; alternate. N6-succinyllysine; alternate is present on Lys-335.

It belongs to the LDH/MDH superfamily. MDH type 1 family. In terms of assembly, homodimer. Acetylation is enhanced by up to 67% after treatment either with trichostin A (TSA) or with nicotinamide (NAM) with the appearance of tri- and tetraacetylations. Glucose also increases acetylation by about 60%.

It is found in the mitochondrion matrix. It catalyses the reaction (S)-malate + NAD(+) = oxaloacetate + NADH + H(+). With respect to regulation, enzyme activity is enhanced by acetylation. The polypeptide is Malate dehydrogenase, mitochondrial (MDH2) (Homo sapiens (Human)).